The following is a 448-amino-acid chain: KSNGMVSEGHAYFSQQLNFETPIRTENGTEISMIKMTVKSRVLLXGTVALIYPSPESIDFQGLFVKLFLSKPSPPVLSLNETTDAGQFSLNDTNEDPFAPLSRSRRAVSNSXNANASLVSEILERIGPVCLFFDRQFQLYSLNVNSVNLTLSASVSVQIDGPHTSRIDVSLVLSVGQNLTSVVIQKFVRMVSLQELSDVNLNFPPIFRFLRGSTSFLESNTDVRGRLVVLARFRLSLPLQNNSVDPPRLNLKIEPYAVIVVRRLIVAMSVBXIQQXVXARXVVXXSGPKVTLSFNDDQLCVTVSDRVIGPDVPVTFFRRLRVCRRIPRVGRLWVRTRRGWRLRRIFTFSRRCFWVIISGFRGRLSPTVTQEGFVRVCNITKAANPSILLPTPTSQIAQSISTAQMVSSTSASIFATPVLALQSSSLRISPASTAPTSATVSSPVASIS.

In terms of tissue distribution, component of the acid-insoluble and acid-soluble organic matrix of the aragonitic skeleton (at protein level).

The protein resides in the secreted. This is an uncharacterized protein from Acropora millepora (Staghorn coral).